Here is a 250-residue protein sequence, read N- to C-terminus: Silencing boundary-establishment protein FUB1 (250 aa).

The disordered stretch occupies residues 179 to 250 (PDWSGGLPNP…GFGGSGSGFI (72 aa)). Positions 202–213 (PNRRPAPRREDM) are enriched in basic and acidic residues. Gly residues predominate over residues 229–250 (PGSGGFGGSGSGGFGGSGSGFI).

Belongs to the proteasome inhibitor PI31 family. In terms of assembly, interacts with the 20S proteasome.

In terms of biological role, plays a role in the establishment of transcriptional silencing boundaries, preventing the propagation of heterochromatic silencing. This chain is Silencing boundary-establishment protein FUB1, found in Saccharomyces cerevisiae (strain ATCC 204508 / S288c) (Baker's yeast).